Consider the following 364-residue polypeptide: G-protein coupled receptor 4 (364 aa).

At 1–8 the chain is on the extracellular side; that stretch reads MCNVSQDS. An N-linked (GlcNAc...) asparagine glycan is attached at Asn-3. A helical membrane pass occupies residues 9–45; it reads CNIDSRLDSLFPPTLYIFVMVIGFPTNCLSLWAAFVQ. 2 cysteine pairs are disulfide-bonded: Cys-9/Cys-258 and Cys-90/Cys-168. Residues 46-49 lie on the Cytoplasmic side of the membrane; that stretch reads VRQK. Residues 50–80 traverse the membrane as a helical segment; sequence NELGVYLLNLSISDLLYIATLPPWVNYFLHQ. At 81–85 the chain is on the extracellular side; it reads DNWIH. Residues 86-121 traverse the membrane as a helical segment; sequence GPESCKLFGFILYTNIYISIGFLSCISVDRYLAVAH. Over 122-129 the chain is Cytoplasmic; it reads PLKFAKVR. The chain crosses the membrane as a helical span at residues 130 to 156; the sequence is RVKTAAVVSAVVWAIEIGANSAPLFHN. Residues 157-172 are Extracellular-facing; the sequence is ELFEDRFNHTFCFEKY. The extracellular loop 2 (ECL2) stretch occupies residues 157-172; the sequence is ELFEDRFNHTFCFEKY. N-linked (GlcNAc...) asparagine glycosylation occurs at Asn-164. Residues 173 to 210 traverse the membrane as a helical segment; it reads PMEDWVAQMNLYRVFVGFLFPWVLMLFCYQGILRAVKT. The Cytoplasmic segment spans residues 211–214; the sequence is NVST. A helical membrane pass occupies residues 215-250; sequence EREEKAKIKRLALSLIAILLFCFAPYHLILLSRSVV. At 251–260 the chain is on the extracellular side; the sequence is YLGQPCDCTF. Residues 261-289 traverse the membrane as a helical segment; it reads EENIFTAYHVSLALTSLNCVADPILYCLA. At 290-364 the chain is on the cytoplasmic side; sequence NEGARSEVTR…RVRRRRDCKC (75 aa).

The protein belongs to the G-protein coupled receptor 1 family.

It is found in the cell membrane. Its activity is regulated as follows. Activated by a network of residues that connects an extracellular-facing cavity to Glu-145, a conserved charged residue buried in the transmembrane core of the receptor. Protonation likely drives conformational changes in extracellular loop 2 (ECL2), which stabilizes movement of transmembrane 3 (TM3) and a series of rearrangements that connect the extracellular-facing cavity to Glu-145, a residue only conserved in proton-sensing G-protein coupled receptors. Functionally, proton-sensing G-protein coupled receptor activated by extracellular pH, which is required to monitor pH changes and generate adaptive reactions. Ligand binding causes a conformation change that triggers signaling via guanine nucleotide-binding proteins (G proteins) and modulates the activity of downstream effectors, such as adenylate cyclase. The polypeptide is G-protein coupled receptor 4 (Callorhinchus milii (Ghost shark)).